Consider the following 498-residue polypeptide: Protein flp (498 aa).

The next 4 helical transmembrane spans lie at 6-26 (LYFL…IYIT), 389-409 (FNIV…FSAY), 433-453 (LTLC…YLIL), and 471-491 (LALI…LLFL).

The protein resides in the cell membrane. Functionally, its precise function is unknown. Has no penicillin-binding activity and is not involved in methicillin resistance. The protein is Protein flp (flp) of Staphylococcus aureus (strain Mu50 / ATCC 700699).